We begin with the raw amino-acid sequence, 471 residues long: Bifunctional protein GlmU (471 aa).

A pyrophosphorylase region spans residues 1–232 (MSDITAVLLA…EEDALAPNDR (232 aa)). UDP-N-acetyl-alpha-D-glucosamine-binding positions include 9–12 (LAAG), Lys23, Gln73, 78–79 (GT), 102–104 (YGD), Gly141, Glu157, and Asn230. Asp104 contributes to the Mg(2+) binding site. Asn230 contacts Mg(2+). Positions 233 to 253 (VELARAEARLRRQINERHMRN) are linker. The tract at residues 254 to 471 (GVTIINPDAT…RQRKMNREGT (218 aa)) is N-acetyltransferase. 2 residues coordinate UDP-N-acetyl-alpha-D-glucosamine: Arg335 and Lys353. Catalysis depends on His365, which acts as the Proton acceptor. UDP-N-acetyl-alpha-D-glucosamine contacts are provided by Tyr368 and Asn379. Acetyl-CoA contacts are provided by residues Ala382, 388–389 (NY), Ala425, and Arg444.

The protein in the N-terminal section; belongs to the N-acetylglucosamine-1-phosphate uridyltransferase family. This sequence in the C-terminal section; belongs to the transferase hexapeptide repeat family. Homotrimer. Mg(2+) is required as a cofactor.

The protein localises to the cytoplasm. The enzyme catalyses alpha-D-glucosamine 1-phosphate + acetyl-CoA = N-acetyl-alpha-D-glucosamine 1-phosphate + CoA + H(+). The catalysed reaction is N-acetyl-alpha-D-glucosamine 1-phosphate + UTP + H(+) = UDP-N-acetyl-alpha-D-glucosamine + diphosphate. Its pathway is nucleotide-sugar biosynthesis; UDP-N-acetyl-alpha-D-glucosamine biosynthesis; N-acetyl-alpha-D-glucosamine 1-phosphate from alpha-D-glucosamine 6-phosphate (route II): step 2/2. It functions in the pathway nucleotide-sugar biosynthesis; UDP-N-acetyl-alpha-D-glucosamine biosynthesis; UDP-N-acetyl-alpha-D-glucosamine from N-acetyl-alpha-D-glucosamine 1-phosphate: step 1/1. The protein operates within bacterial outer membrane biogenesis; LPS lipid A biosynthesis. Functionally, catalyzes the last two sequential reactions in the de novo biosynthetic pathway for UDP-N-acetylglucosamine (UDP-GlcNAc). The C-terminal domain catalyzes the transfer of acetyl group from acetyl coenzyme A to glucosamine-1-phosphate (GlcN-1-P) to produce N-acetylglucosamine-1-phosphate (GlcNAc-1-P), which is converted into UDP-GlcNAc by the transfer of uridine 5-monophosphate (from uridine 5-triphosphate), a reaction catalyzed by the N-terminal domain. The chain is Bifunctional protein GlmU from Symbiobacterium thermophilum (strain DSM 24528 / JCM 14929 / IAM 14863 / T).